The following is a 444-amino-acid chain: Orexin receptor type 2 (444 aa).

Residues 1 to 10 (MSGTKLEDSP) show a composition bias toward basic and acidic residues. The tract at residues 1–30 (MSGTKLEDSPPCRNWSSAPELNETQEPFLN) is disordered. Residues 1–54 (MSGTKLEDSPPCRNWSSAPELNETQEPFLNPTDYDDEEFLRYLWREYLHPKEYE) lie on the Extracellular side of the membrane. 2 N-linked (GlcNAc...) asparagine glycosylation sites follow: Asn14 and Asn22. Positions 14–27 (NWSSAPELNETQEP) are enriched in polar residues. The segment at 33–49 (DYDDEEFLRYLWREYLH) is required for response to orexin-A. The helical transmembrane segment at 55–75 (WVLIAGYIIVFVVALIGNVLV) threads the bilayer. Residues 76 to 88 (CVAVWKNHHMRTV) lie on the Cytoplasmic side of the membrane. Residues 89 to 110 (TNYFIVNLSLADVLVTITCLPA) form a helical membrane-spanning segment. Residues 111–127 (TLVVDITETWFFGQSLC) are Extracellular-facing. A disulfide bridge connects residues Cys127 and Cys210. The chain crosses the membrane as a helical span at residues 128–150 (KVIPYLQTVSVSVSVLTLSCIAL). The Cytoplasmic portion of the chain corresponds to 151-170 (DRWYAICHPLMFKSTAKRAR). Residues 171–191 (NSIVIIWIVSCIIMIPQAIVM) form a helical membrane-spanning segment. Over 192–222 (ECSTMLPGLANKTTLFTVCDERWGGEIYPKM) the chain is Extracellular. A glycan (N-linked (GlcNAc...) asparagine) is linked at Asn202. A helical transmembrane segment spans residues 223–243 (YHICFFLVTYMAPLCLMVLAY). Topologically, residues 244–304 (LQIFRKLWCR…QIRARRKTAR (61 aa)) are cytoplasmic. The chain crosses the membrane as a helical span at residues 305–326 (MLMVVLLVFAICYLPISILNVL). Over 327–342 (KRVFGMFTHTEDRETV) the chain is Extracellular. Residues 343 to 366 (YAWFTFSHWLVYANSAANPIIYNF) traverse the membrane as a helical segment. Over 367–444 (LSGKFREEFK…ANGAGQLQNW (78 aa)) the chain is Cytoplasmic.

The protein belongs to the G-protein coupled receptor 1 family.

It is found in the cell membrane. Its function is as follows. Nonselective, high-affinity receptor for both orexin-A and orexin-B neuropeptides. Triggers an increase in cytoplasmic Ca(2+) levels in response to orexin-A binding. The chain is Orexin receptor type 2 (HCRTR2) from Sus scrofa (Pig).